The chain runs to 128 residues: Centrosomal protein 15 (128 aa).

The protein localises to the cell projection. The protein resides in the cilium. Functionally, may play a role in ciliary assembly. The chain is Centrosomal protein 15 (CEP15) from Bos taurus (Bovine).